The sequence spans 223 residues: Alpha-enolase (223 aa).

A Mg(2+)-binding site is contributed by Ser-8. Tyr-12 carries the post-translational modification Phosphotyrosine. Position 25 is an N6-acetyllysine (Lys-25). Residue Glu-39 participates in substrate binding. An N6-acetyllysine modification is found at Lys-61. Residue Glu-69 is the Proton donor of the active site. Lys-87 carries the N6-acetyllysine; alternate modification. The residue at position 87 (Lys-87) is an N6-malonyllysine; alternate. At Lys-87 the chain carries N6-succinyllysine; alternate. Positions 99 and 119 each coordinate Mg(2+). A substrate-binding site is contributed by Asp-119. N6-acetyllysine occurs at positions 133 and 141. The active-site Proton acceptor is the Lys-141. Substrate-binding positions include 168–171 (SHRS) and Lys-192. The interval 202–223 (YNQILRIEEELGSKSFRNPLAK) is required for interaction with PLG. At Lys-215 the chain carries N6-acetyllysine; alternate. The residue at position 215 (Lys-215) is an N6-malonyllysine; alternate. At Lys-215 the chain carries N6-succinyllysine; alternate.

It belongs to the enolase family. In terms of assembly, mammalian enolase is composed of 3 isozyme subunits, alpha, beta and gamma, which can form homodimers or heterodimers which are cell-type and development-specific. ENO1 interacts with PLG in the neuronal plasma membrane and promotes its activation. The C-terminal lysine is required for this binding. Interacts with ENO4 and PGAM2. Interacts with CMTM6. It depends on Mg(2+) as a cofactor. In terms of processing, ISGylated. Post-translationally, lysine 2-hydroxyisobutyrylation (Khib) by p300/EP300 activates the phosphopyruvate hydratase activity.

It localises to the cytoplasm. The protein localises to the cell membrane. The enzyme catalyses (2R)-2-phosphoglycerate = phosphoenolpyruvate + H2O. Its pathway is carbohydrate degradation; glycolysis; pyruvate from D-glyceraldehyde 3-phosphate: step 4/5. Its function is as follows. Glycolytic enzyme the catalyzes the conversion of 2-phosphoglycerate to phosphoenolpyruvate. In addition to glycolysis, involved in various processes such as growth control, hypoxia tolerance and allergic responses. May also function in the intravascular and pericellular fibrinolytic system due to its ability to serve as a receptor and activator of plasminogen on the cell surface of several cell-types such as leukocytes and neurons. Stimulates immunoglobulin production. This Mesocricetus auratus (Golden hamster) protein is Alpha-enolase.